We begin with the raw amino-acid sequence, 431 residues long: Chaperone SurA (431 aa).

A signal peptide spans 1 to 22 (MKLWKPTLISVLSALTLFNAHA). PpiC domains are found at residues 173–271 (TVQY…KIDD) and 280–380 (VTEV…EVLD).

Its subcellular location is the periplasm. The catalysed reaction is [protein]-peptidylproline (omega=180) = [protein]-peptidylproline (omega=0). Its function is as follows. Chaperone involved in the correct folding and assembly of outer membrane proteins. Recognizes specific patterns of aromatic residues and the orientation of their side chains, which are found more frequently in integral outer membrane proteins. May act in both early periplasmic and late outer membrane-associated steps of protein maturation. This Vibrio cholerae serotype O1 (strain ATCC 39315 / El Tor Inaba N16961) protein is Chaperone SurA.